A 223-amino-acid polypeptide reads, in one-letter code: Adenine phosphoribosyltransferase (223 aa).

It belongs to the purine/pyrimidine phosphoribosyltransferase family. Homodimer.

Its subcellular location is the cytoplasm. It carries out the reaction AMP + diphosphate = 5-phospho-alpha-D-ribose 1-diphosphate + adenine. It participates in purine metabolism; AMP biosynthesis via salvage pathway; AMP from adenine: step 1/1. Catalyzes a salvage reaction resulting in the formation of AMP, that is energically less costly than de novo synthesis. The polypeptide is Adenine phosphoribosyltransferase (Mycobacterium bovis (strain ATCC BAA-935 / AF2122/97)).